Consider the following 368-residue polypeptide: Glucose 1-dehydrogenase 2 (368 aa).

Cysteine 41 contacts Zn(2+). Threonine 43 lines the substrate pocket. Zn(2+) contacts are provided by histidine 68 and glutamate 69. Substrate is bound at residue asparagine 91. Zn(2+) contacts are provided by cysteine 95, cysteine 98, cysteine 101, cysteine 109, and glutamine 152. Substrate contacts are provided by glutamine 152 and aspartate 156. Residues asparagine 213 to arginine 215, phenylalanine 279 to phenylalanine 281, leucine 307 to asparagine 309, and lysine 356 each bind NADP(+). A substrate-binding site is contributed by asparagine 309.

It belongs to the zinc-containing alcohol dehydrogenase family. Glucose 1-dehydrogenase subfamily. Zn(2+) is required as a cofactor.

The enzyme catalyses D-glucose + NAD(+) = D-glucono-1,5-lactone + NADH + H(+). It carries out the reaction D-glucose + NADP(+) = D-glucono-1,5-lactone + NADPH + H(+). Catalyzes the NAD(P)(+)-dependent oxidation of D-glucose to D-gluconate via gluconolactone. Can utilize both NAD(+) and NADP(+) as electron acceptor. Is involved in the degradation of glucose through a non-phosphorylative variant of the Entner-Doudoroff pathway. The sequence is that of Glucose 1-dehydrogenase 2 from Saccharolobus solfataricus (strain ATCC 35092 / DSM 1617 / JCM 11322 / P2) (Sulfolobus solfataricus).